The following is a 265-amino-acid chain: Exosome complex component Rrp4 (265 aa).

An S1 motif domain is found at 65–137; that stretch reads GDNVIGKIVD…EVNNIDLTTK (73 aa). The KH domain occupies 147-205; the sequence is KGGQIVKITPSRVPRVIGRGGSMINMIKKLTMTRIIVGQNGWIWVSGKNDALEKLAIEA. A disordered region spans residues 241 to 265; it reads EIPKLEEEPQGEDEVNGNDGEARGA.

This sequence belongs to the RRP4 family. In terms of assembly, component of the archaeal exosome complex. Forms a trimer of Rrp4 and/or Csl4 subunits. The trimer associates with a hexameric ring-like arrangement composed of 3 Rrp41-Rrp42 heterodimers.

It is found in the cytoplasm. Functionally, non-catalytic component of the exosome, which is a complex involved in RNA degradation. Increases the RNA binding and the efficiency of RNA degradation. Confers strong poly(A) specificity to the exosome. The chain is Exosome complex component Rrp4 from Pyrococcus abyssi (strain GE5 / Orsay).